The sequence spans 394 residues: Phosphoglycerate kinase (394 aa).

Substrate contacts are provided by residues 21-23 (DFN), Arg36, 59-62 (HLGR), Arg118, and Arg151. At Ser183 the chain carries Phosphoserine. Residues Lys201 and Gly292 each coordinate ATP. Position 299 is a phosphothreonine (Thr299). ATP contacts are provided by residues Glu323 and 350–353 (GGDS).

Belongs to the phosphoglycerate kinase family. Monomer.

It is found in the cytoplasm. It catalyses the reaction (2R)-3-phosphoglycerate + ATP = (2R)-3-phospho-glyceroyl phosphate + ADP. The protein operates within carbohydrate degradation; glycolysis; pyruvate from D-glyceraldehyde 3-phosphate: step 2/5. The polypeptide is Phosphoglycerate kinase (Bacillus thuringiensis subsp. konkukian (strain 97-27)).